Reading from the N-terminus, the 47-residue chain is Bifunctional chitinase/lysozyme (47 aa).

The 47-residue stretch at 1–47 (GGIAIYWGQNGNEGTLTQTCNTGKYSYVNIAFLNKFGNGQTPEINLA) folds into the GH18 domain.

The protein belongs to the glycosyl hydrolase 18 family. Chitinase class II subfamily.

The protein resides in the secreted. Its subcellular location is the extracellular space. It catalyses the reaction Random endo-hydrolysis of N-acetyl-beta-D-glucosaminide (1-&gt;4)-beta-linkages in chitin and chitodextrins.. The catalysed reaction is Hydrolysis of (1-&gt;4)-beta-linkages between N-acetylmuramic acid and N-acetyl-D-glucosamine residues in a peptidoglycan and between N-acetyl-D-glucosamine residues in chitodextrins.. Functionally, bifunctional enzyme with lysozyme/chitinase activity. In Parthenocissus quinquefolia (Virginia creeper), this protein is Bifunctional chitinase/lysozyme.